We begin with the raw amino-acid sequence, 121 residues long: Small ribosomal subunit protein eS24 (121 aa).

The protein belongs to the eukaryotic ribosomal protein eS24 family.

This chain is Small ribosomal subunit protein eS24, found in Pyrobaculum aerophilum (strain ATCC 51768 / DSM 7523 / JCM 9630 / CIP 104966 / NBRC 100827 / IM2).